The primary structure comprises 300 residues: Glutamyl-Q tRNA(Asp) synthetase (300 aa).

L-glutamate-binding positions include 8–12 (RFAPT) and aspartate 44. Residues 11 to 21 (PTPSGDLHLGS) carry the 'HIGH' region motif. Cysteine 100, cysteine 102, tyrosine 122, and cysteine 126 together coordinate Zn(2+). 2 residues coordinate L-glutamate: tyrosine 181 and arginine 199. The 'KMSKS' region motif lies at 237 to 241 (KLSKQ). ATP is bound at residue lysine 240.

The protein belongs to the class-I aminoacyl-tRNA synthetase family. GluQ subfamily. Requires Zn(2+) as cofactor.

Catalyzes the tRNA-independent activation of glutamate in presence of ATP and the subsequent transfer of glutamate onto a tRNA(Asp). Glutamate is transferred on the 2-amino-5-(4,5-dihydroxy-2-cyclopenten-1-yl) moiety of the queuosine in the wobble position of the QUC anticodon. The protein is Glutamyl-Q tRNA(Asp) synthetase of Synechococcus sp. (strain ATCC 27144 / PCC 6301 / SAUG 1402/1) (Anacystis nidulans).